Here is a 117-residue protein sequence, read N- to C-terminus: MSIKYSSKINKIRTFALSLIFIGVIVMYLGLFFRTSPVIMTLFMLFGMLFLVASGIVYFWIGTLSTRAVQVVCPSCGKVTKMLGRVDLCMFCREPLTLDRELEGKEFDEKYNKKRKS.

The next 2 membrane-spanning stretches (helical) occupy residues 12 to 32 and 42 to 62; these read IRTFALSLIFIGVIVMYLGLF and LFMLFGMLFLVASGIVYFWIG.

It belongs to the UPF0295 family.

Its subcellular location is the cell membrane. This chain is UPF0295 protein GK0479, found in Geobacillus kaustophilus (strain HTA426).